The chain runs to 383 residues: Histidine decarboxylase (383 aa).

A substrate-binding site is contributed by H120. N6-(pyridoxal phosphate)lysine is present on K233.

The protein belongs to the group II decarboxylase family. As to quaternary structure, homotetramer. Pyridoxal 5'-phosphate is required as a cofactor.

The catalysed reaction is L-histidine + H(+) = histamine + CO2. This is Histidine decarboxylase from Acinetobacter baumannii (strain ACICU).